The primary structure comprises 74 residues: Brevinin-2CG1 (74 aa).

The signal sequence occupies residues 1–22 (MFTMKKSMLVLFFLGTISLSLC). A propeptide spans 23 to 39 (EEERNADEDDGEMTEEV) (removed in mature form). C68 and C74 are joined by a disulfide.

Expressed by the skin glands.

It localises to the secreted. Its function is as follows. Antimicrobial peptide active against a variety of Gram-positive and some Gram-negative bacterial strains. Has antifungal activity against a slime mold isolate. Has hemolytic activity against human erythrocytes. The chain is Brevinin-2CG1 from Amolops chunganensis (Chungan torrent frog).